The primary structure comprises 190 residues: Double zinc ribbon protein MJ0416 (190 aa).

A DZANK-type zinc finger spans residues 134–183; the sequence is CPNCNNYISDSWKYCAHCGAKLKEEEEEVLRCPNCKRPVQPEWIVCPYCG.

This Methanocaldococcus jannaschii (strain ATCC 43067 / DSM 2661 / JAL-1 / JCM 10045 / NBRC 100440) (Methanococcus jannaschii) protein is Double zinc ribbon protein MJ0416.